The sequence spans 31 residues: Cyclotide vibi-H (31 aa).

The segment at residues 1–31 (GLLPCAESCVYIPCLTTVIGCSCKSKVCYKN) is a cross-link (cyclopeptide (Gly-Asn)). 3 disulfides stabilise this stretch: Cys5–Cys21, Cys9–Cys23, and Cys14–Cys28.

In terms of processing, this is a cyclic peptide.

Its function is as follows. Probably participates in a plant defense mechanism. Has cytotoxic activity, active against a human lymphoma cell line with an IC(50) of 1.6 uM. This chain is Cyclotide vibi-H, found in Viola biflora (Yellow wood violet).